Reading from the N-terminus, the 1074-residue chain is DNA annealing helicase and endonuclease ZRANB3 (1074 aa).

The region spanning 46–208 is the Helicase ATP-binding domain; it reads TFALRRDGRC…FMQIEALFPQ (163 aa). The DNA annealing helicase activity stretch occupies residues 46 to 481; that stretch reads TFALRRDGRC…GRKEKLQAEE (436 aa). An ATP-binding site is contributed by 59–66; sequence DEMGLGKT. Residues 157-160 carry the DEAH box motif; sequence DESH. Positions 325–481 constitute a Helicase C-terminal domain; sequence AVKDYIKMML…GRKEKLQAEE (157 aa). Positions 519–526 match the PIP-box motif; it reads QRDIRSFF. Position 566 is a phosphoserine (Ser566). The segment at 617 to 647 adopts a RanBP2-type zinc-finger fold; sequence FCGEGWQCAFCTYINNSVLPYCEMCENPRGG. Positions 659 to 719 are disordered; sequence QNKNKNEKDD…RLTPQPGDEQ (61 aa). Composition is skewed to basic and acidic residues over residues 662 to 674 and 696 to 711; these read NKNE…DTSK and AKSK…EDRL. Residues 1006–1046 enclose the HNH domain; that stretch reads PGEGHFWQVDHIKPVSGGGGQCSLDNLQTLCTVCHRERTAQ. The endonuclease activity stretch occupies residues 1006–1074; that stretch reads PGEGHFWQVD…SDITRFLVKK (69 aa). Positions 1069–1073 match the APIM motif motif; that stretch reads RFLVK.

The protein belongs to the SNF2/RAD54 helicase family. In terms of assembly, interacts (via PIP-box and RanBP2-type zinc finger) with PCNA (when PCNA is polyubiquitinated via 'Lys-63'-linked polyubiquitin).

The protein resides in the nucleus. It localises to the chromosome. Its function is as follows. DNA annealing helicase and endonuclease required to maintain genome stability at stalled or collapsed replication forks by facilitating fork restart and limiting inappropriate recombination that could occur during template switching events. Recruited to the sites of stalled DNA replication by polyubiquitinated PCNA and acts as a structure-specific endonuclease that cleaves the replication fork D-loop intermediate, generating an accessible 3'-OH group in the template of the leading strand, which is amenable to extension by DNA polymerase. In addition to endonuclease activity, also catalyzes the fork regression via annealing helicase activity in order to prevent disintegration of the replication fork and the formation of double-strand breaks. The chain is DNA annealing helicase and endonuclease ZRANB3 (ZRANB3) from Bos taurus (Bovine).